A 347-amino-acid chain; its full sequence is S-adenosylmethionine:tRNA ribosyltransferase-isomerase (347 aa).

This sequence belongs to the QueA family. In terms of assembly, monomer.

It localises to the cytoplasm. The catalysed reaction is 7-aminomethyl-7-carbaguanosine(34) in tRNA + S-adenosyl-L-methionine = epoxyqueuosine(34) in tRNA + adenine + L-methionine + 2 H(+). It participates in tRNA modification; tRNA-queuosine biosynthesis. Functionally, transfers and isomerizes the ribose moiety from AdoMet to the 7-aminomethyl group of 7-deazaguanine (preQ1-tRNA) to give epoxyqueuosine (oQ-tRNA). This Streptococcus thermophilus (strain CNRZ 1066) protein is S-adenosylmethionine:tRNA ribosyltransferase-isomerase.